We begin with the raw amino-acid sequence, 296 residues long: 4-hydroxy-tetrahydrodipicolinate synthase (296 aa).

Thr-49 provides a ligand contact to pyruvate. The Proton donor/acceptor role is filled by Tyr-137. Residue Lys-165 is the Schiff-base intermediate with substrate of the active site. Position 208 (Ile-208) interacts with pyruvate.

It belongs to the DapA family. In terms of assembly, homotetramer; dimer of dimers.

It localises to the cytoplasm. The catalysed reaction is L-aspartate 4-semialdehyde + pyruvate = (2S,4S)-4-hydroxy-2,3,4,5-tetrahydrodipicolinate + H2O + H(+). It functions in the pathway amino-acid biosynthesis; L-lysine biosynthesis via DAP pathway; (S)-tetrahydrodipicolinate from L-aspartate: step 3/4. Its function is as follows. Catalyzes the condensation of (S)-aspartate-beta-semialdehyde [(S)-ASA] and pyruvate to 4-hydroxy-tetrahydrodipicolinate (HTPA). This Ehrlichia canis (strain Jake) protein is 4-hydroxy-tetrahydrodipicolinate synthase.